The sequence spans 173 residues: Plasmolipin (173 aa).

Residues 1 to 34 (MADFPGKVSTQTSSQEPQRSFAISSSVDMGFIKS) are Cytoplasmic-facing. The region spanning 31 to 160 (FIKSIPGILL…SSYFAYLGWR (130 aa)) is the MARVEL domain. A helical membrane pass occupies residues 35-55 (IPGILLIAEIVVGLLVWTLIA). At 56-67 (STPHYLIPALGW) the chain is on the extracellular side. The helical transmembrane segment at 68 to 88 (VLFVSITLWLLSIALLVILLL) threads the bilayer. Over 89-98 (SLHQRLPSVP) the chain is Cytoplasmic. A helical transmembrane segment spans residues 99–119 (WPLVLLVFYSVAALLYLTAFL). The Extracellular portion of the chain corresponds to 120 to 138 (ANAATVPGGYYQGHLGASA). A helical transmembrane segment spans residues 139-159 (FFGIVETLLYTASSYFAYLGW). Over 160–173 (RGEGQNAAGSTVPV) the chain is Cytoplasmic.

Belongs to the MAL family. In terms of assembly, forms oligomers. In terms of tissue distribution, expressed in the posterior midgut.

The protein resides in the cell membrane. It is found in the myelin membrane. It localises to the apical cell membrane. Its subcellular location is the recycling endosome membrane. The protein localises to the vesicle. In terms of biological role, main component of the myelin sheath that plays an important role in myelin membrane biogenesis and myelination. Plays an essential function in apical endocytosis. Plays an important role by activating the Notch signaling pathway, which is essential for cell differentiation and results in correct patterning of the intestinal epithelium, particularly of the posterior gut absorptive cells. In Danio rerio (Zebrafish), this protein is Plasmolipin (pllp).